The following is a 450-amino-acid chain: uncharacterized protein (450 aa).

Positions 141 to 151 (WLDKTDGEKNS) are enriched in basic and acidic residues. Disordered stretches follow at residues 141–171 (WLDK…DSAG), 276–298 (LQDS…AVSQ), and 395–416 (DDED…LSRN). Polar residues predominate over residues 152–171 (EASSTDNSLENSTKGADSAG). Residues 283–298 (QGDKGEKESKDDAVSQ) show a composition bias toward basic and acidic residues. A compositionally biased stretch (acidic residues) spans 395 to 411 (DDEDEDNVDNSEGDEES).

This is an uncharacterized protein from Saccharomyces cerevisiae (strain ATCC 204508 / S288c) (Baker's yeast).